The primary structure comprises 841 residues: Probable alpha-glucuronidase A (841 aa).

Residues 1-19 (MLRLPLVLVWSLWASLTVA) form the signal peptide. 12 N-linked (GlcNAc...) asparagine glycosylation sites follow: Asn50, Asn104, Asn223, Asn280, Asn311, Asn344, Asn466, Asn528, Asn577, Asn683, Asn724, and Asn733.

Belongs to the glycosyl hydrolase 67 family.

It localises to the secreted. The enzyme catalyses an alpha-D-glucuronoside + H2O = D-glucuronate + an alcohol. In terms of biological role, alpha-glucuronidase involved in the hydrolysis of xylan, a major structural heterogeneous polysaccharide found in plant biomass representing the second most abundant polysaccharide in the biosphere, after cellulose. Releases 4-O-methylglucuronic acid from xylan. The chain is Probable alpha-glucuronidase A (aguA) from Aspergillus terreus (strain NIH 2624 / FGSC A1156).